The primary structure comprises 179 residues: Large ribosomal subunit protein uL5 (179 aa).

This sequence belongs to the universal ribosomal protein uL5 family. Part of the 50S ribosomal subunit; part of the 5S rRNA/L5/L18/L25 subcomplex. Contacts the 5S rRNA and the P site tRNA. Forms a bridge to the 30S subunit in the 70S ribosome.

Its function is as follows. This is one of the proteins that bind and probably mediate the attachment of the 5S RNA into the large ribosomal subunit, where it forms part of the central protuberance. In the 70S ribosome it contacts protein S13 of the 30S subunit (bridge B1b), connecting the 2 subunits; this bridge is implicated in subunit movement. Contacts the P site tRNA; the 5S rRNA and some of its associated proteins might help stabilize positioning of ribosome-bound tRNAs. This Burkholderia mallei (strain NCTC 10247) protein is Large ribosomal subunit protein uL5.